A 281-amino-acid polypeptide reads, in one-letter code: 4-diphosphocytidyl-2-C-methyl-D-erythritol kinase (281 aa).

K15 is an active-site residue. 98-108 (PTGAGLGGGSS) lines the ATP pocket. D140 is an active-site residue.

The protein belongs to the GHMP kinase family. IspE subfamily.

The catalysed reaction is 4-CDP-2-C-methyl-D-erythritol + ATP = 4-CDP-2-C-methyl-D-erythritol 2-phosphate + ADP + H(+). It participates in isoprenoid biosynthesis; isopentenyl diphosphate biosynthesis via DXP pathway; isopentenyl diphosphate from 1-deoxy-D-xylulose 5-phosphate: step 3/6. Its function is as follows. Catalyzes the phosphorylation of the position 2 hydroxy group of 4-diphosphocytidyl-2C-methyl-D-erythritol. The protein is 4-diphosphocytidyl-2-C-methyl-D-erythritol kinase of Neisseria gonorrhoeae (strain NCCP11945).